A 222-amino-acid polypeptide reads, in one-letter code: GTP cyclohydrolase 1 (222 aa).

Zn(2+) contacts are provided by Cys-111, His-114, and Cys-182.

Belongs to the GTP cyclohydrolase I family. In terms of assembly, toroid-shaped homodecamer, composed of two pentamers of five dimers.

The catalysed reaction is GTP + H2O = 7,8-dihydroneopterin 3'-triphosphate + formate + H(+). Its pathway is cofactor biosynthesis; 7,8-dihydroneopterin triphosphate biosynthesis; 7,8-dihydroneopterin triphosphate from GTP: step 1/1. In Citrobacter koseri (strain ATCC BAA-895 / CDC 4225-83 / SGSC4696), this protein is GTP cyclohydrolase 1.